The following is a 1124-amino-acid chain: PAN2-PAN3 deadenylation complex catalytic subunit PAN2 (1124 aa).

WD repeat units follow at residues 19-58, 118-157, 158-195, and 309-348; these read IDNS…IPMP, PGFN…TTSF, NHTG…TVKS, and SSNT…SKNF. Positions 351-484 are linker; that stretch reads FPSYLEQPDF…EYKLSNKFEV (134 aa). A USP domain is found at 484–861; it reads VPNCYSNLKI…KPIIVMYQLA (378 aa). The Exonuclease domain maps to 917–1091; that stretch reads IAIDAEFVAL…EDANTALLLY (175 aa). A divalent metal cation-binding residues include Asp-920, Glu-922, Asp-1030, and Asp-1083.

This sequence belongs to the peptidase C19 family. PAN2 subfamily. In terms of assembly, forms a heterotrimer with an asymmetric homodimer of the regulatory subunit PAN3 to form the poly(A)-nuclease (PAN) deadenylation complex. It depends on a divalent metal cation as a cofactor.

Its subcellular location is the cytoplasm. It carries out the reaction Exonucleolytic cleavage of poly(A) to 5'-AMP.. Its activity is regulated as follows. Positively regulated by the regulatory subunit PAN3. Its function is as follows. Catalytic subunit of the poly(A)-nuclease (PAN) deadenylation complex, one of two cytoplasmic mRNA deadenylases involved in mRNA turnover. PAN specifically shortens poly(A) tails of RNA and the activity is stimulated by poly(A)-binding protein PAB1. PAN deadenylation is followed by rapid degradation of the shortened mRNA tails by the CCR4-NOT complex. Deadenylated mRNAs are then degraded by two alternative mechanisms, namely exosome-mediated 3'-5' exonucleolytic degradation, or deadenylation-dependent mRNA decaping and subsequent 5'-3' exonucleolytic degradation by XRN1. May also be involved in post-transcriptional maturation of mRNA poly(A) tails. The chain is PAN2-PAN3 deadenylation complex catalytic subunit PAN2 from Debaryomyces hansenii (strain ATCC 36239 / CBS 767 / BCRC 21394 / JCM 1990 / NBRC 0083 / IGC 2968) (Yeast).